The chain runs to 474 residues: Glutamine synthetase (474 aa).

A GS beta-grasp domain is found at 15 to 99 (EDVQFIDVRF…MTFFIHDPIT (85 aa)). The GS catalytic domain occupies 107–474 (PRNIAKKAET…PYEFTLYYDI (368 aa)). The Mg(2+) site is built by E132 and E134. Residue E210 coordinates ATP. Mg(2+)-binding residues include E215 and E223. L-glutamate is bound by residues 267 to 268 (NG) and G268. H272 is a binding site for Mg(2+). Residues 274-276 (HSS) and S276 each bind ATP. L-glutamate is bound by residues R325, E331, and R343. The ATP site is built by R343, R348, and K357. E362 provides a ligand contact to Mg(2+). R364 lines the L-glutamate pocket. Position 402 is an O-AMP-tyrosine (Y402).

Belongs to the glutamine synthetase family. As to quaternary structure, oligomer of 12 subunits arranged in the form of two hexagons. The cofactor is Mg(2+).

Its subcellular location is the cytoplasm. It catalyses the reaction L-glutamate + NH4(+) + ATP = L-glutamine + ADP + phosphate + H(+). Its activity is regulated as follows. The activity of this enzyme could be controlled by adenylation under conditions of abundant glutamine. Catalyzes the ATP-dependent biosynthesis of glutamine from glutamate and ammonia. The sequence is that of Glutamine synthetase from Frankia alni.